Consider the following 266-residue polypeptide: MAKRLTKQQLTKAIANTLEAPATQSRRPRNRRRRRSAARQPQSTQAGVSMAPIAQGTMVRLREPSLRTAGGVTVLTHSELSTELSVTNAIVITSELVMPYTMGTWLRGVAANWSKYSLLSVRYTYLPSCPSTTSGSIHMGFQYDMADTLPVSVNQLSNLRGYVSGQVWSGSSGLCYINGTRCLDTANAITTTLDVGQLGKKWYPFKTSTDFTTAVGVNVNIATPLVPARLIIAMLDGSSSTAVSTGRLYVSYTIQLIEPTALALNN.

The interval 2 to 71 is r domain, interaction with RNA; the sequence is AKRLTKQQLT…REPSLRTAGG (70 aa). The interval 13 to 51 is disordered; that stretch reads AIANTLEAPATQSRRPRNRRRRRSAARQPQSTQAGVSMA. A compositionally biased stretch (basic residues) spans 26–37; that stretch reads RRPRNRRRRRSA. A s domain, virion shell region spans residues 72 to 257; sequence VTVLTHSELS…LYVSYTIQLI (186 aa). Cysteines 175 and 182 form a disulfide. Positions 258-266 are p domain, projecting; it reads EPTALALNN.

The protein belongs to the icosahedral plant coat protein family.

It is found in the virion. Capsid protein self-assembles to form an icosahedral capsid with a T=3 symmetry, about 30 nm in diameter, and consisting of 180 capsid proteins. Each icosahedral unit contains three protein subunits (Potential). This is Capsid protein from Southern bean mosaic virus (isolate Bean/United States/Arkansas) (SBMV).